The chain runs to 244 residues: 14-3-3 protein homolog 1 (244 aa).

This sequence belongs to the 14-3-3 family.

This Echinococcus granulosus (Hydatid tapeworm) protein is 14-3-3 protein homolog 1.